Consider the following 214-residue polypeptide: Superoxide dismutase [Mn] (214 aa).

Mn(2+) is bound by residues His-27, His-82, Asp-169, and His-173.

The protein belongs to the iron/manganese superoxide dismutase family. In terms of assembly, homodimer. It depends on Mn(2+) as a cofactor.

It catalyses the reaction 2 superoxide + 2 H(+) = H2O2 + O2. Functionally, destroys superoxide anion radicals which are normally produced within the cells and which are toxic to biological systems. This Pasteurella multocida (strain Pm70) protein is Superoxide dismutase [Mn] (sodA).